The following is a 224-amino-acid chain: Ribonuclease HII (224 aa).

Residues 36–224 (RGVAGVDEVG…RRSFLRRFLG (189 aa)) enclose the RNase H type-2 domain. 3 residues coordinate a divalent metal cation: aspartate 42, glutamate 43, and aspartate 138.

The protein belongs to the RNase HII family. Requires Mn(2+) as cofactor. It depends on Mg(2+) as a cofactor.

The protein resides in the cytoplasm. It catalyses the reaction Endonucleolytic cleavage to 5'-phosphomonoester.. Endonuclease that specifically degrades the RNA of RNA-DNA hybrids. The chain is Ribonuclease HII from Parasynechococcus marenigrum (strain WH8102).